The primary structure comprises 674 residues: Carcinine transporter (674 aa).

Residues 1 to 53 (MSDIEDNDGDEYDELSELRQRHKPESQPSVDEAFDLDDLLPTIGEFGKYQKLL) lie on the Cytoplasmic side of the membrane. The helical transmembrane segment at 54–74 (VFGICLPACIPCGFCAFNQLF) threads the bilayer. Residues 75–178 (MADTPDDYWC…DLVCDQDIYP (104 aa)) lie on the Extracellular side of the membrane. N-linked (GlcNAc...) asparagine glycans are attached at residues Asn122, Asn141, and Asn156. The chain crosses the membrane as a helical span at residues 179–199 (TIGLAALNTGGPVGVYLFGLL). The Cytoplasmic portion of the chain corresponds to 200 to 206 (NDRGGRR). A helical transmembrane segment spans residues 207-227 (LSYFVCLATLLAGSLMTSLSK). Over 228 to 236 (DFWTWAGSR) the chain is Extracellular. Residues 237 to 257 (VIVGLTIPAVYQIPFIISLEL) traverse the membrane as a helical segment. Topologically, residues 258-264 (VGENYRS) are cytoplasmic. The helical transmembrane segment at 265–285 (FVTVMTCTFYTSGIMLLSGVT) threads the bilayer. The Extracellular portion of the chain corresponds to 286–293 (YLERDWVR). A helical membrane pass occupies residues 294-314 (LSYITSLPFYAYFLYMFVMPE). The Cytoplasmic segment spans residues 315-385 (SPRWLLMRGR…CRTPNMRLKT (71 aa)). A helical transmembrane segment spans residues 386–406 (ILITLSWFANETVYLGLSYYG). Over 407-414 (PALGTNQY) the chain is Extracellular. A helical transmembrane segment spans residues 415-435 (VSFFLSAVVELPSYLCCWYFM). Residues 436–441 (DTWGRR) lie on the Cytoplasmic side of the membrane. The helical transmembrane segment at 442-462 (WPLSLSMILGGVACVITVMLP) threads the bilayer. At 463–469 (DDAVDET) the chain is on the extracellular side. The chain crosses the membrane as a helical span at residues 470–490 (LVLYLVSKALLSASFLIIYPF). At 491–500 (AGELYPTQVR) the chain is on the cytoplasmic side. Residues 501 to 521 (GIGIGASSYIGGLGLIGIPFI) form a helical membrane-spanning segment. Over 522–527 (TYLGKD) the chain is Extracellular. The helical transmembrane segment at 528 to 548 (NLKLPLVIMGFLSMLGGMTGL) threads the bilayer. Over 549-674 (RLPETLHHRL…DGTMQLTHWI (126 aa)) the chain is Cytoplasmic. Residues 614–631 (RDSRRVREPAPRIDERTP) are compositionally biased toward basic and acidic residues. Residues 614 to 647 (RDSRRVREPAPRIDERTPLDTTASGSGRPVHRPS) form a disordered region.

This sequence belongs to the major facilitator (TC 2.A.1) superfamily. Organic cation transporter (TC 2.A.1.19) family. In terms of tissue distribution, expressed in photoreceptor cells.

Its subcellular location is the cell membrane. It is found in the cell projection. The protein localises to the axon. Its function is as follows. Carcinine transporter which is required for recycling of the neurotransmitter histamine in photoreceptor neurons of the compound eye. Following histamine release from photoreceptors and its uptake by glia where it is converted to carcinine, required for the uptake of carcinine from glia into photoreceptor cells where it can be hydrolyzed by tan to form histamine and beta-alanine. In Drosophila melanogaster (Fruit fly), this protein is Carcinine transporter.